A 72-amino-acid polypeptide reads, in one-letter code: DNA-directed RNA polymerase subunit Rpo10 (72 aa).

Residues C7, C10, C54, and C55 each contribute to the Zn(2+) site.

It belongs to the archaeal Rpo10/eukaryotic RPB10 RNA polymerase subunit family. In terms of assembly, part of the RNA polymerase complex. It depends on Zn(2+) as a cofactor.

Its subcellular location is the cytoplasm. It carries out the reaction RNA(n) + a ribonucleoside 5'-triphosphate = RNA(n+1) + diphosphate. Functionally, DNA-dependent RNA polymerase (RNAP) catalyzes the transcription of DNA into RNA using the four ribonucleoside triphosphates as substrates. In Picrophilus torridus (strain ATCC 700027 / DSM 9790 / JCM 10055 / NBRC 100828 / KAW 2/3), this protein is DNA-directed RNA polymerase subunit Rpo10.